Reading from the N-terminus, the 483-residue chain is Aspartyl/glutamyl-tRNA(Asn/Gln) amidotransferase subunit B (483 aa).

The protein belongs to the GatB/GatE family. GatB subfamily. As to quaternary structure, heterotrimer of A, B and C subunits.

The enzyme catalyses L-glutamyl-tRNA(Gln) + L-glutamine + ATP + H2O = L-glutaminyl-tRNA(Gln) + L-glutamate + ADP + phosphate + H(+). It carries out the reaction L-aspartyl-tRNA(Asn) + L-glutamine + ATP + H2O = L-asparaginyl-tRNA(Asn) + L-glutamate + ADP + phosphate + 2 H(+). In terms of biological role, allows the formation of correctly charged Asn-tRNA(Asn) or Gln-tRNA(Gln) through the transamidation of misacylated Asp-tRNA(Asn) or Glu-tRNA(Gln) in organisms which lack either or both of asparaginyl-tRNA or glutaminyl-tRNA synthetases. The reaction takes place in the presence of glutamine and ATP through an activated phospho-Asp-tRNA(Asn) or phospho-Glu-tRNA(Gln). In Rickettsia rickettsii (strain Iowa), this protein is Aspartyl/glutamyl-tRNA(Asn/Gln) amidotransferase subunit B.